Reading from the N-terminus, the 448-residue chain is Glutamate--tRNA ligase 1 (448 aa).

The 'HIGH' region signature appears at 9-19 (PSPTGKLHIGN). Residues 240 to 244 (KISKR) carry the 'KMSKS' region motif. K243 provides a ligand contact to ATP.

Belongs to the class-I aminoacyl-tRNA synthetase family. Glutamate--tRNA ligase type 1 subfamily. As to quaternary structure, monomer.

The protein localises to the cytoplasm. The catalysed reaction is tRNA(Glu) + L-glutamate + ATP = L-glutamyl-tRNA(Glu) + AMP + diphosphate. Its function is as follows. Catalyzes the attachment of glutamate to tRNA(Glu) in a two-step reaction: glutamate is first activated by ATP to form Glu-AMP and then transferred to the acceptor end of tRNA(Glu). This is Glutamate--tRNA ligase 1 from Orientia tsutsugamushi (strain Ikeda) (Rickettsia tsutsugamushi).